Reading from the N-terminus, the 194-residue chain is Imidazoleglycerol-phosphate dehydratase (194 aa).

It belongs to the imidazoleglycerol-phosphate dehydratase family.

It is found in the cytoplasm. It carries out the reaction D-erythro-1-(imidazol-4-yl)glycerol 3-phosphate = 3-(imidazol-4-yl)-2-oxopropyl phosphate + H2O. It functions in the pathway amino-acid biosynthesis; L-histidine biosynthesis; L-histidine from 5-phospho-alpha-D-ribose 1-diphosphate: step 6/9. This Bacillus velezensis (strain DSM 23117 / BGSC 10A6 / LMG 26770 / FZB42) (Bacillus amyloliquefaciens subsp. plantarum) protein is Imidazoleglycerol-phosphate dehydratase.